We begin with the raw amino-acid sequence, 306 residues long: Acetyl-coenzyme A carboxylase carboxyl transferase subunit beta (306 aa).

Residues 25–294 (VWTKCDSCGQ…PQDPLPHEPR (270 aa)) form the CoA carboxyltransferase N-terminal domain. Zn(2+) is bound by residues Cys-29, Cys-32, Cys-48, and Cys-51. A C4-type zinc finger spans residues 29-51 (CDSCGQVLYRAELERNLEVCPKC). A disordered region spans residues 281–306 (NRPQPQDPLPHEPRPDAVPEDHQDEV). Residues 289–306 (LPHEPRPDAVPEDHQDEV) show a composition bias toward basic and acidic residues.

The protein belongs to the AccD/PCCB family. As to quaternary structure, acetyl-CoA carboxylase is a heterohexamer composed of biotin carboxyl carrier protein (AccB), biotin carboxylase (AccC) and two subunits each of ACCase subunit alpha (AccA) and ACCase subunit beta (AccD). It depends on Zn(2+) as a cofactor.

The protein resides in the cytoplasm. It catalyses the reaction N(6)-carboxybiotinyl-L-lysyl-[protein] + acetyl-CoA = N(6)-biotinyl-L-lysyl-[protein] + malonyl-CoA. The protein operates within lipid metabolism; malonyl-CoA biosynthesis; malonyl-CoA from acetyl-CoA: step 1/1. Functionally, component of the acetyl coenzyme A carboxylase (ACC) complex. Biotin carboxylase (BC) catalyzes the carboxylation of biotin on its carrier protein (BCCP) and then the CO(2) group is transferred by the transcarboxylase to acetyl-CoA to form malonyl-CoA. The polypeptide is Acetyl-coenzyme A carboxylase carboxyl transferase subunit beta (Sodalis glossinidius (strain morsitans)).